The sequence spans 100 residues: Urease subunit gamma (100 aa).

This sequence belongs to the urease gamma subunit family. Heterotrimer of UreA (gamma), UreB (beta) and UreC (alpha) subunits. Three heterotrimers associate to form the active enzyme.

Its subcellular location is the cytoplasm. The enzyme catalyses urea + 2 H2O + H(+) = hydrogencarbonate + 2 NH4(+). The protein operates within nitrogen metabolism; urea degradation; CO(2) and NH(3) from urea (urease route): step 1/1. The chain is Urease subunit gamma from Cereibacter sphaeroides (strain ATCC 17025 / ATH 2.4.3) (Rhodobacter sphaeroides).